The following is a 612-amino-acid chain: MPVYRSRTTTHGRNMAGARGLWRATGMKDSDFGKPIIAVVNSFTQFVPGHVHLKDLGQLVAREIEAAGGVAKEFNTIAVDDGIAMGHDGMLYSLPSRELIADSVEYMVNAHCADAMVCISNCDKITPGMLMASLRLNIPTVFVSGGPMEAGKVVMHGKTHALDLVDAMVAAADDKISDEDVQTIERSACPTCGSCSGMFTANSMNCLTEALGLSLPGNGSTLATHLDRKRLFVEAGHLIVDLARRYYEQDDVKALPRTIASKQAFENAMTLDIAMGGSTNTVLHILAAAHEGEIDFTMADIDALSRRVPCLSKVAPAKSDVHMEDVHRAGGIMSILGELDKGGLLNRDCPTVHAETLGDAIDRWDITRTNSETVRKFYRAAPGGIPTQVAFSQEARWDELDTDRENGVIRSVEHPFSKDGGLAVLKGNLAIDGCIVKTAGVDESILKFSGPARVFESQDASVKAILANEVKAGDVVVIRYEGPKGGPGMQEMLYPTSYLKSKGLGKACALITDGRFSGGTSGLSIGHASPEAANGGTIGLVREGDMIDIDIPNRTISLRVSETELAARRAEQDAKGWYPTEVRKRNVTTALKAYAAFATSADRGAVRDLNVR.

Position 81 (Asp81) interacts with Mg(2+). Residue Cys122 coordinates [2Fe-2S] cluster. Mg(2+)-binding residues include Asp123 and Lys124. The residue at position 124 (Lys124) is an N6-carboxylysine. Cys195 lines the [2Fe-2S] cluster pocket. Glu491 lines the Mg(2+) pocket. Ser517 serves as the catalytic Proton acceptor.

Belongs to the IlvD/Edd family. In terms of assembly, homodimer. [2Fe-2S] cluster serves as cofactor. The cofactor is Mg(2+).

It catalyses the reaction (2R)-2,3-dihydroxy-3-methylbutanoate = 3-methyl-2-oxobutanoate + H2O. The catalysed reaction is (2R,3R)-2,3-dihydroxy-3-methylpentanoate = (S)-3-methyl-2-oxopentanoate + H2O. The protein operates within amino-acid biosynthesis; L-isoleucine biosynthesis; L-isoleucine from 2-oxobutanoate: step 3/4. It participates in amino-acid biosynthesis; L-valine biosynthesis; L-valine from pyruvate: step 3/4. Functions in the biosynthesis of branched-chain amino acids. Catalyzes the dehydration of (2R,3R)-2,3-dihydroxy-3-methylpentanoate (2,3-dihydroxy-3-methylvalerate) into 2-oxo-3-methylpentanoate (2-oxo-3-methylvalerate) and of (2R)-2,3-dihydroxy-3-methylbutanoate (2,3-dihydroxyisovalerate) into 2-oxo-3-methylbutanoate (2-oxoisovalerate), the penultimate precursor to L-isoleucine and L-valine, respectively. This Rhizobium johnstonii (strain DSM 114642 / LMG 32736 / 3841) (Rhizobium leguminosarum bv. viciae) protein is Dihydroxy-acid dehydratase.